We begin with the raw amino-acid sequence, 85 residues long: HssA/B-like protein 59 (85 aa).

This sequence belongs to the hssA/B family.

This is HssA/B-like protein 59 (hssl59) from Dictyostelium discoideum (Social amoeba).